The primary structure comprises 502 residues: Probable cytosol aminopeptidase (502 aa).

The Mn(2+) site is built by lysine 258 and aspartate 263. Residue lysine 270 is part of the active site. Mn(2+) is bound by residues aspartate 281, aspartate 340, and glutamate 342. Arginine 344 is a catalytic residue.

The protein belongs to the peptidase M17 family. Requires Mn(2+) as cofactor.

The protein localises to the cytoplasm. The catalysed reaction is Release of an N-terminal amino acid, Xaa-|-Yaa-, in which Xaa is preferably Leu, but may be other amino acids including Pro although not Arg or Lys, and Yaa may be Pro. Amino acid amides and methyl esters are also readily hydrolyzed, but rates on arylamides are exceedingly low.. It carries out the reaction Release of an N-terminal amino acid, preferentially leucine, but not glutamic or aspartic acids.. In terms of biological role, presumably involved in the processing and regular turnover of intracellular proteins. Catalyzes the removal of unsubstituted N-terminal amino acids from various peptides. This chain is Probable cytosol aminopeptidase, found in Clavibacter michiganensis subsp. michiganensis (strain NCPPB 382).